Here is a 110-residue protein sequence, read N- to C-terminus: UPF0367 protein Syncc9605_2376 (110 aa).

This sequence belongs to the UPF0367 family.

This is UPF0367 protein Syncc9605_2376 from Synechococcus sp. (strain CC9605).